The primary structure comprises 341 residues: Basic membrane protein B (341 aa).

The signal sequence occupies residues 1–14 (MRIAIFIFGILLTS). C15 carries the N-palmitoyl cysteine lipid modification. C15 carries the S-diacylglycerol cysteine lipid modification.

It belongs to the BMP lipoprotein family. As to quaternary structure, monomer.

The protein resides in the cell inner membrane. May be part of an ABC-type nucleoside uptake system involved in the purine salvage pathway. The sequence is that of Basic membrane protein B (bmpB) from Borreliella afzelii (strain PKo) (Borrelia afzelii).